The sequence spans 446 residues: Histone acetyltransferase ESA1 (446 aa).

The region spanning 24 to 75 (IKCQCWVRKDEEERLAEILSINARVSPSKFYVHYVNFNKRLDEWVTGDRINL) is the Tudor-knot domain. A disordered region spans residues 86 to 121 (RQLEEDTNKKQKKKKKFPQKAAVVESDAKSSEMGEG). An MYST-type HAT domain is found at 163-434 (AHVRNLSKII…IDAEKLLWKP (272 aa)). A C2HC MYST-type; degenerate zinc finger spans residues 196–221 (VYIDDFTLQYFGSRKQYERYRKKCTL). Positions 246-267 (RTWCRNLCLLSKLFLDHKTLYY) match the ESA1-RPD3 motif motif. Lysine 263 carries the N6-acetyllysine; by autocatalysis modification. Acetyl-CoA contacts are provided by residues 304–308 (ACILT) and 313–319 (QRMGYGR). Catalysis depends on glutamate 339, which acts as the Proton donor/acceptor. Residue serine 343 coordinates acetyl-CoA.

The protein belongs to the MYST (SAS/MOZ) family. As to quaternary structure, component of the NuA4 histone acetyltransferase complex. Post-translationally, autoacetylation at Lys-263 is required for proper function.

The protein resides in the nucleus. It localises to the chromosome. The catalysed reaction is L-lysyl-[histone] + acetyl-CoA = N(6)-acetyl-L-lysyl-[histone] + CoA + H(+). It catalyses the reaction L-lysyl-[protein] + acetyl-CoA = N(6)-acetyl-L-lysyl-[protein] + CoA + H(+). The enzyme catalyses 2-hydroxyisobutanoyl-CoA + L-lysyl-[protein] = N(6)-(2-hydroxyisobutanoyl)-L-lysyl-[protein] + CoA + H(+). It carries out the reaction (2E)-butenoyl-CoA + L-lysyl-[protein] = N(6)-(2E)-butenoyl-L-lysyl-[protein] + CoA + H(+). In terms of biological role, catalytic component of the NuA4 histone acetyltransferase (HAT) complex which is involved in epigenetic transcriptional activation of selected genes principally by acetylation of nucleosomal histones H4, H3, H2B, H2A and H2A variant H2A.Z. Acetylates histone H4 to form H4K5ac, H4K8ac, H4K12ac and H4K16ac, histone H3 to form H3K14ac, and histone H2A to form H2AK4ac and H2AK7ac. The NuA4 complex is involved in the DNA damage response and is required for chromosome segregation. The NuA4 complex plays a direct role in repair of DNA double-strand breaks (DSBs) through homologous recombination. Recruitment to promoters depends on H3K4me. Also acetylates non-histone proteins. In addition to protein acetyltransferase, can use different acyl-CoA substrates, such as 2-hydroxyisobutanoyl-CoA (2-hydroxyisobutyryl-CoA) or (2E)-butenoyl-CoA (crotonyl-CoA), and is able to mediate protein 2-hydroxyisobutyrylation and crotonylation, respectively. The protein is Histone acetyltransferase ESA1 (ESA1) of Candida glabrata (strain ATCC 2001 / BCRC 20586 / JCM 3761 / NBRC 0622 / NRRL Y-65 / CBS 138) (Yeast).